The sequence spans 515 residues: 2,3-bisphosphoglycerate-independent phosphoglycerate mutase (515 aa).

Residues D14 and S64 each coordinate Mn(2+). S64 acts as the Phosphoserine intermediate in catalysis. Residues H125, 155–156 (RD), R187, R193, 263–266 (RADR), and K337 each bind substrate. Residues D404, H408, D445, H446, and H464 each contribute to the Mn(2+) site.

The protein belongs to the BPG-independent phosphoglycerate mutase family. As to quaternary structure, monomer. Requires Mn(2+) as cofactor.

The catalysed reaction is (2R)-2-phosphoglycerate = (2R)-3-phosphoglycerate. It functions in the pathway carbohydrate degradation; glycolysis; pyruvate from D-glyceraldehyde 3-phosphate: step 3/5. Its function is as follows. Catalyzes the interconversion of 2-phosphoglycerate and 3-phosphoglycerate. The protein is 2,3-bisphosphoglycerate-independent phosphoglycerate mutase of Yersinia pestis bv. Antiqua (strain Antiqua).